The following is a 74-amino-acid chain: uncharacterized protein (74 aa).

Basic and acidic residues-rich tracts occupy residues 1 to 13 and 20 to 60; these read MKKQ…HQLK and IKAK…KSFE. Positions 1–74 are disordered; sequence MKKQKSIDKH…ESQMDWHQYK (74 aa). Residues 64–74 are compositionally biased toward polar residues; sequence NESQMDWHQYK.

This is an uncharacterized protein from Bacillus subtilis (strain 168).